A 361-amino-acid polypeptide reads, in one-letter code: MKFVDEAFIDIAAGDGGSGCVSFSHEKYKEFGGPNGGDGGRGGHVYAVADVNLNTLVDFRFSRRHEARNGQHGMGSDMFGAKGDDIILKMPVGTILTDAETGEVLFELLVPGEQVLIAKGGDGGFGNLRFKSSTNRAPRSKTPGWPGERKNLKLELKVLADVGLLGMPNAGKSTFISAVSNARPRIADYPFTTLHPNLGVVRVGPEQSFVVADLPGLIEGASEGAGLGHLFLRHLQRTRLLLHIVDLAPFDEGVDPVAQAKAIVRELKKYDEALYEKPRWLVLNKLDMVDADKRAAIVKDFVKRFKFKGPVFEISALTREGCEHLIKTIYQHVKQVQKSEQPVEEVDPRFVPLPPESPETP.

The Obg domain occupies 1–159; the sequence is MKFVDEAFID…KNLKLELKVL (159 aa). One can recognise an OBG-type G domain in the interval 160–334; sequence ADVGLLGMPN…LIKTIYQHVK (175 aa). Residues 166–173, 191–195, 213–216, 284–287, and 315–317 contribute to the GTP site; these read GMPNAGKS, FTTLH, DLPG, NKLD, and SAL. Positions 173 and 193 each coordinate Mg(2+). A disordered region spans residues 339–361; the sequence is SEQPVEEVDPRFVPLPPESPETP. Over residues 351-361 the composition is skewed to pro residues; it reads VPLPPESPETP.

It belongs to the TRAFAC class OBG-HflX-like GTPase superfamily. OBG GTPase family. Monomer. The cofactor is Mg(2+).

The protein localises to the cytoplasm. In terms of biological role, an essential GTPase which binds GTP, GDP and possibly (p)ppGpp with moderate affinity, with high nucleotide exchange rates and a fairly low GTP hydrolysis rate. Plays a role in control of the cell cycle, stress response, ribosome biogenesis and in those bacteria that undergo differentiation, in morphogenesis control. This chain is GTPase Obg, found in Polaromonas sp. (strain JS666 / ATCC BAA-500).